A 636-amino-acid chain; its full sequence is Epithelial sodium channel subunit alpha (636 aa).

Residues 1 to 28 (MKSENQPEDKRIGKLKREANMQKMKEAA) are disordered. At 1 to 77 (MKSENQPEDK…VCSKKNRMKT (77 aa)) the chain is on the cytoplasmic side. Residues 78-98 (AFWSILFFFTFGLMYWQFGII) traverse the membrane as a helical segment. Residues 99-549 (YREYFSFPVN…SQWSLWFGSS (451 aa)) lie on the Extracellular side of the membrane. Disulfide bonds link cysteine 126–cysteine 293, cysteine 218–cysteine 225, cysteine 270–cysteine 277, cysteine 381–cysteine 466, cysteine 403–cysteine 443, cysteine 403–cysteine 462, cysteine 407–cysteine 458, cysteine 416–cysteine 443, cysteine 416–cysteine 466, and cysteine 418–cysteine 432. Residues 550–570 (VLSVVELVELILDFIAITCIL) form a helical membrane-spanning segment. At 571–636 (AIHWLNMNRS…LRRVSSQQTE (66 aa)) the chain is on the cytoplasmic side.

The protein belongs to the amiloride-sensitive sodium channel (TC 1.A.6) family. SCNN1A subfamily. Heterotrimer; containing an alpha/SCNN1A, a beta/SCNN1B and a gamma/SCNN1G subunit.

It localises to the apical cell membrane. It is found in the cell projection. Its subcellular location is the cilium. The protein resides in the cytoplasmic granule. The protein localises to the cytoplasm. It localises to the cytoplasmic vesicle. It is found in the secretory vesicle. Its subcellular location is the acrosome. The protein resides in the flagellum. The catalysed reaction is Na(+)(in) = Na(+)(out). Originally identified and characterized by its inhibition by the diuretic drug amiloride. This is one of the three pore-forming subunits of the heterotrimeric epithelial sodium channel (ENaC), a critical regulator of sodium balance and fluid homeostasis. ENaC operates in epithelial tissues, where it mediates the electrodiffusion of sodium ions from extracellular fluid through the apical membrane of cells, with water following osmotically. This is Epithelial sodium channel subunit alpha from Anolis carolinensis (Green anole).